The primary structure comprises 228 residues: 7-cyano-7-deazaguanine synthase (228 aa).

16–26 lines the ATP pocket; it reads FSGGQDSTTCL. Zn(2+)-binding residues include Cys-195, Cys-203, Cys-206, and Cys-209.

Belongs to the QueC family. The cofactor is Zn(2+).

It catalyses the reaction 7-carboxy-7-deazaguanine + NH4(+) + ATP = 7-cyano-7-deazaguanine + ADP + phosphate + H2O + H(+). It participates in purine metabolism; 7-cyano-7-deazaguanine biosynthesis. Catalyzes the ATP-dependent conversion of 7-carboxy-7-deazaguanine (CDG) to 7-cyano-7-deazaguanine (preQ(0)). This is 7-cyano-7-deazaguanine synthase from Haemophilus influenzae (strain ATCC 51907 / DSM 11121 / KW20 / Rd).